A 214-amino-acid polypeptide reads, in one-letter code: tRNA (guanine-N(7)-)-methyltransferase (214 aa).

4 residues coordinate S-adenosyl-L-methionine: glutamate 45, aspartate 70, asparagine 97, and asparagine 119. A substrate-binding site is contributed by lysine 123. Positions 125–130 are interaction with RNA; the sequence is RHNKRR. Residues aspartate 155 and 193–196 contribute to the substrate site; that span reads TEYE.

Belongs to the class I-like SAM-binding methyltransferase superfamily. TrmB family.

The catalysed reaction is guanosine(46) in tRNA + S-adenosyl-L-methionine = N(7)-methylguanosine(46) in tRNA + S-adenosyl-L-homocysteine. It functions in the pathway tRNA modification; N(7)-methylguanine-tRNA biosynthesis. In terms of biological role, catalyzes the formation of N(7)-methylguanine at position 46 (m7G46) in tRNA. The sequence is that of tRNA (guanine-N(7)-)-methyltransferase from Clostridium novyi (strain NT).